A 474-amino-acid chain; its full sequence is Probable phenylalanine--tRNA ligase alpha subunit (474 aa).

The contains the major tRNA-Phe binding sites stretch occupies residues 1-150; the sequence is MSLSQKILEL…KRKLIYQAKE (150 aa). L-phenylalanine-binding positions include Thr-308, 350 to 352, and Tyr-390; that span reads QVE. Residue Glu-392 coordinates Mg(2+). Phe-416 is a binding site for L-phenylalanine.

It belongs to the class-II aminoacyl-tRNA synthetase family. Phe-tRNA synthetase alpha subunit type 2 subfamily. In terms of assembly, tetramer of two alpha and two beta subunits. Requires Mg(2+) as cofactor.

It localises to the cytoplasm. The enzyme catalyses tRNA(Phe) + L-phenylalanine + ATP = L-phenylalanyl-tRNA(Phe) + AMP + diphosphate + H(+). This chain is Probable phenylalanine--tRNA ligase alpha subunit, found in Vairimorpha ceranae (strain BRL01) (Microsporidian parasite).